We begin with the raw amino-acid sequence, 527 residues long: Transcription initiation factor TFIID subunit 6b (527 aa).

The Histone-fold domain occupies 3-99 (TKESIEVIAQ…NLEPTSGSKS (97 aa)). Disordered regions lie at residues 410-442 (SPPTSSVWKTNGKLTSPRQSKRKASSDNLTHQP) and 462-492 (MRGTTTVPQQSHTDADARHHNSPSTIAPKTS). Composition is skewed to polar residues over residues 416-427 (VWKTNGKLTSPR) and 462-473 (MRGTTTVPQQSH).

The protein belongs to the TAF6 family. In terms of assembly, component of the TFIID complex. TFIID is composed of TATA binding protein (TBP) and a number of TBP-associated factors (TAFs) whose MWs range from 14-217 kDa. Interacts with TAF5 and TAF9. In terms of tissue distribution, expressed in roots, leaves, inflorescences and siliques.

It localises to the nucleus. Its function is as follows. TAFs are components of the transcription factor IID (TFIID) complex that is essential for mediating regulation of RNA polymerase transcription. Not redundant with TAF6. This is Transcription initiation factor TFIID subunit 6b (TAF6B) from Arabidopsis thaliana (Mouse-ear cress).